Here is a 138-residue protein sequence, read N- to C-terminus: Flavodoxin (138 aa).

The 136-residue stretch at 1 to 136 (MKIVYWSGTG…DCIEFGKKIA (136 aa)) folds into the Flavodoxin-like domain.

The protein belongs to the flavodoxin family. FMN serves as cofactor.

In terms of biological role, low-potential electron donor to a number of redox enzymes. In Clostridium beijerinckii (Clostridium MP), this protein is Flavodoxin.